A 147-amino-acid chain; its full sequence is UPF0275 protein PM0504 (147 aa).

The protein belongs to the UPF0275 family.

This is UPF0275 protein PM0504 from Pasteurella multocida (strain Pm70).